Reading from the N-terminus, the 84-residue chain is CLAVATA3/ESR (CLE)-related protein 13 (84 aa).

Residues 1 to 29 (MGRYTTDQVQVYVLVIVLCTFFSTLQARS) form the signal peptide. The interval 57 to 84 (KQVRDISGDRLSPAGPDPQHNGRSPPRK) is disordered. P69 and P72 each carry hydroxyproline. An O-linked (Ara...) hydroxyproline glycan is attached at P72.

Belongs to the CLV3/ESR signal peptide family. In terms of processing, the O-glycosylation (arabinosylation) of the hydroxyproline Pro-72 enhances binding affinity of the CLE13p peptide for its receptor. In terms of tissue distribution, expressed in young nodules throughout the central tissue. Expressed in the apical region of elongated nodules, corresponding to the meristematic and early infection zones.

The protein localises to the secreted. It localises to the extracellular space. Functionally, signaling peptide involved in the regulation of nodulation. Moves from root to shoot to function with the receptor kinase SUNN, in a signaling pathway that plays roles during cellular differentiation, both at the onset of nodulation, and later during nodule meristem development and subsequent homeostasis. Interacts with SUNN signaling to control nodule numbers. SUNN is involved in the autoregulation of nodulation (AON), a long distance systemic signaling from root to shoot and back again, which allows legumes to limit the number of root nodules formed based on available nitrogen and previous rhizobial colonization. In Medicago truncatula (Barrel medic), this protein is CLAVATA3/ESR (CLE)-related protein 13.